The chain runs to 703 residues: Ion-translocating oxidoreductase complex subunit C (703 aa).

4Fe-4S ferredoxin-type domains are found at residues 369–398 and 408–437; these read YDPQ…QQMY and KSNQ…IQYF. The [4Fe-4S] cluster site is built by Cys-378, Cys-381, Cys-384, Cys-388, Cys-417, Cys-420, Cys-423, and Cys-427. Disordered stretches follow at residues 467–542 and 555–680; these read RLER…PDNS and RQQT…PKKA. The segment covering 485–497 has biased composition (basic and acidic residues); it reads ARREELAANKGED. Low complexity predominate over residues 559–577; that stretch reads NGNSPVSSASNSDSATISA. The span at 578 to 592 shows a compositional bias: polar residues; it reads DNTHSTPKTAQNQTA. Low complexity-rich tracts occupy residues 598-629 and 641-669; these read AAVA…TEKT and AAVA…EKTA.

It belongs to the 4Fe4S bacterial-type ferredoxin family. RnfC subfamily. The complex is composed of six subunits: RnfA, RnfB, RnfC, RnfD, RnfE and RnfG. Requires [4Fe-4S] cluster as cofactor.

The protein localises to the cell inner membrane. In terms of biological role, part of a membrane-bound complex that couples electron transfer with translocation of ions across the membrane. The chain is Ion-translocating oxidoreductase complex subunit C from Actinobacillus succinogenes (strain ATCC 55618 / DSM 22257 / CCUG 43843 / 130Z).